The chain runs to 247 residues: MNVLSCSINTLKGLYDISGVEVGQHFYWQIGGFQVHGQVLITSWVVIAILLGSATIAVRNPQTIPTGGQNFFEYVLEFIRDVSKTQIGEEYGPWVPFIGTMFLFIFVSNWSGALLPWKIIQLPHGELAAPTNDINTTVALALLTSVAYFYAGLTKRGLGYFGKYIQPTPILLPINILEDFTKPLSLSFRLFGNILADELVVVVLVSLVPLVVPIPVMLLGLFTSGIQALIFATLAAAYIGESMEGHH.

The next 5 helical transmembrane spans lie at 38–58 (QVLI…TIAV), 95–115 (VPFI…GALL), 134–154 (INTT…AGLT), 199–219 (LVVV…VMLL), and 220–240 (GLFT…AYIG).

The protein belongs to the ATPase A chain family. As to quaternary structure, F-type ATPases have 2 components, CF(1) - the catalytic core - and CF(0) - the membrane proton channel. CF(1) has five subunits: alpha(3), beta(3), gamma(1), delta(1), epsilon(1). CF(0) has four main subunits: a, b, b' and c.

It localises to the plastid. The protein localises to the chloroplast thylakoid membrane. In terms of biological role, key component of the proton channel; it plays a direct role in the translocation of protons across the membrane. This chain is ATP synthase subunit a, chloroplastic, found in Solanum lycopersicum (Tomato).